The sequence spans 752 residues: Endo-1,4-beta-xylanase 3 (752 aa).

The segment at 1 to 22 (MEKNTNTNHTSDDNNDKNHTNE) is disordered. The segment covering 10–22 (TSDDNNDKNHTNE) has biased composition (basic and acidic residues). CBM-cenC domains lie at 26–163 (KIIL…EGPP) and 197–344 (NIVE…VQGP). The 296-residue stretch at 397 to 692 (FPYIVKVKQT…NEAGKRFLEV (296 aa)) folds into the GH10 domain. The active-site Proton donor is E526. E627 serves as the catalytic Nucleophile.

Belongs to the glycosyl hydrolase 10 (cellulase F) family. In terms of tissue distribution, confined to immature xylems.

It carries out the reaction Endohydrolysis of (1-&gt;4)-beta-D-xylosidic linkages in xylans.. It participates in glycan degradation; xylan degradation. Its function is as follows. Binds to and hydrolyzes insoluble and soluble xylan substrates. This is Endo-1,4-beta-xylanase 3 from Arabidopsis thaliana (Mouse-ear cress).